Reading from the N-terminus, the 122-residue chain is Large ribosomal subunit protein uL14 (122 aa).

The protein belongs to the universal ribosomal protein uL14 family. In terms of assembly, part of the 50S ribosomal subunit. Forms a cluster with proteins L3 and L19. In the 70S ribosome, L14 and L19 interact and together make contacts with the 16S rRNA in bridges B5 and B8.

In terms of biological role, binds to 23S rRNA. Forms part of two intersubunit bridges in the 70S ribosome. This chain is Large ribosomal subunit protein uL14, found in Erythrobacter litoralis (strain HTCC2594).